The primary structure comprises 562 residues: Dihydroxy-acid dehydratase (562 aa).

Residue aspartate 78 coordinates Mg(2+). Cysteine 119 contributes to the [2Fe-2S] cluster binding site. Mg(2+)-binding residues include aspartate 120 and lysine 121. An N6-carboxylysine modification is found at lysine 121. [2Fe-2S] cluster is bound at residue cysteine 192. Glutamate 450 serves as a coordination point for Mg(2+). The active-site Proton acceptor is serine 476.

It belongs to the IlvD/Edd family. As to quaternary structure, homodimer. Requires [2Fe-2S] cluster as cofactor. Mg(2+) is required as a cofactor.

It carries out the reaction (2R)-2,3-dihydroxy-3-methylbutanoate = 3-methyl-2-oxobutanoate + H2O. The enzyme catalyses (2R,3R)-2,3-dihydroxy-3-methylpentanoate = (S)-3-methyl-2-oxopentanoate + H2O. It participates in amino-acid biosynthesis; L-isoleucine biosynthesis; L-isoleucine from 2-oxobutanoate: step 3/4. It functions in the pathway amino-acid biosynthesis; L-valine biosynthesis; L-valine from pyruvate: step 3/4. Functionally, functions in the biosynthesis of branched-chain amino acids. Catalyzes the dehydration of (2R,3R)-2,3-dihydroxy-3-methylpentanoate (2,3-dihydroxy-3-methylvalerate) into 2-oxo-3-methylpentanoate (2-oxo-3-methylvalerate) and of (2R)-2,3-dihydroxy-3-methylbutanoate (2,3-dihydroxyisovalerate) into 2-oxo-3-methylbutanoate (2-oxoisovalerate), the penultimate precursor to L-isoleucine and L-valine, respectively. The polypeptide is Dihydroxy-acid dehydratase (Nautilia profundicola (strain ATCC BAA-1463 / DSM 18972 / AmH)).